We begin with the raw amino-acid sequence, 122 residues long: Large ribosomal subunit protein uL14 (122 aa).

This sequence belongs to the universal ribosomal protein uL14 family. Part of the 50S ribosomal subunit. Forms a cluster with proteins L3 and L19. In the 70S ribosome, L14 and L19 interact and together make contacts with the 16S rRNA in bridges B5 and B8.

Binds to 23S rRNA. Forms part of two intersubunit bridges in the 70S ribosome. This is Large ribosomal subunit protein uL14 from Xanthomonas oryzae pv. oryzae (strain MAFF 311018).